A 137-amino-acid chain; its full sequence is Large ribosomal subunit protein uL16 (137 aa).

This sequence belongs to the universal ribosomal protein uL16 family. Part of the 50S ribosomal subunit.

Functionally, binds 23S rRNA and is also seen to make contacts with the A and possibly P site tRNAs. This is Large ribosomal subunit protein uL16 from Aromatoleum aromaticum (strain DSM 19018 / LMG 30748 / EbN1) (Azoarcus sp. (strain EbN1)).